The following is a 169-amino-acid chain: Cilia- and flagella-associated protein HOATZ (169 aa).

Disordered stretches follow at residues 1-21, 52-89, and 144-169; these read METGPSEEPSGRKESQEMCPP, SQLVLRRDSSQRLPVARPRRSRGSENSHSSQSFHLASN, and KAKEHKAKKVVSESDKEDQEEVKTLD. A compositionally biased stretch (polar residues) spans 75 to 89; that stretch reads SENSHSSQSFHLASN.

The protein belongs to the HOATZ family.

It is found in the cytoplasm. Its subcellular location is the cell projection. It localises to the cilium. Required for motile ciliogenesis and flagellar genesis by mediating the maturation of the glycolytic enzyme ENO4. This is Cilia- and flagella-associated protein HOATZ from Homo sapiens (Human).